We begin with the raw amino-acid sequence, 611 residues long: Adenosylhomocysteinase 3 (611 aa).

Composition is skewed to low complexity over residues Met1–Val14, Ala36–Ala57, and Gly68–Pro81. Residues Met1–Ser184 form a disordered region. Position 2 is an N-acetylserine (Ser2). Residues Ser2–Asp109 are LISN domain, inhibits interaction with ITPR1. Ser107 carries the post-translational modification Phosphoserine. Over residues Arg135–Leu144 the composition is skewed to basic residues. Residues Ser145–Asp164 are compositionally biased toward low complexity. A phosphoserine mark is found at Ser149, Ser152, Ser155, and Ser158. The substrate site is built by Thr236, Asp310, and Glu335. Ser336–Thr338 contacts NAD(+). The substrate site is built by Lys365 and Asp369. Residues Asn370, Gly401 to Gly406, Glu422, Asn457, Met478 to Gly479, and Asn525 contribute to the NAD(+) site.

The protein belongs to the adenosylhomocysteinase family. Homotetramer. Forms heteromultimers with AHCYL1 (via the C-terminal region). Interacts with ITPR1; with lower affinity than AHCYL1 and maybe via ITPR1. Interacts with SLC4A4. Interacts with ZCCHC4. NAD(+) is required as a cofactor. Post-translationally, phosphorylated during neuronal differentiation at the LISN domain.

Its subcellular location is the cytoplasm. The protein localises to the microsome. The catalysed reaction is S-adenosyl-L-homocysteine + H2O = L-homocysteine + adenosine. It participates in amino-acid biosynthesis; L-homocysteine biosynthesis; L-homocysteine from S-adenosyl-L-homocysteine: step 1/1. Functionally, may regulate the electrogenic sodium/bicarbonate cotransporter SLC4A4 activity and Mg(2+)-sensitivity. On the contrary of its homolog AHCYL1, does not regulate ITPR1 sensitivity to inositol 1,4,5-trisphosphate. The sequence is that of Adenosylhomocysteinase 3 (AHCYL2) from Homo sapiens (Human).